The sequence spans 366 residues: Cobalt-precorrin-5B C(1)-methyltransferase (366 aa).

This sequence belongs to the CbiD family.

It carries out the reaction Co-precorrin-5B + S-adenosyl-L-methionine = Co-precorrin-6A + S-adenosyl-L-homocysteine. It participates in cofactor biosynthesis; adenosylcobalamin biosynthesis; cob(II)yrinate a,c-diamide from sirohydrochlorin (anaerobic route): step 6/10. Its function is as follows. Catalyzes the methylation of C-1 in cobalt-precorrin-5B to form cobalt-precorrin-6A. This chain is Cobalt-precorrin-5B C(1)-methyltransferase, found in Paraburkholderia phymatum (strain DSM 17167 / CIP 108236 / LMG 21445 / STM815) (Burkholderia phymatum).